Here is a 402-residue protein sequence, read N- to C-terminus: Argininosuccinate synthase (402 aa).

ATP contacts are provided by residues 11-19 (AYSGGLDTS) and alanine 39. The L-citrulline site is built by tyrosine 90 and serine 95. Glycine 120 is an ATP binding site. Residues threonine 122, asparagine 126, and aspartate 127 each contribute to the L-aspartate site. Asparagine 126 provides a ligand contact to L-citrulline. 5 residues coordinate L-citrulline: arginine 130, serine 179, serine 188, glutamate 264, and tyrosine 276.

The protein belongs to the argininosuccinate synthase family. Type 1 subfamily. Homotetramer.

It localises to the cytoplasm. It carries out the reaction L-citrulline + L-aspartate + ATP = 2-(N(omega)-L-arginino)succinate + AMP + diphosphate + H(+). Its pathway is amino-acid biosynthesis; L-arginine biosynthesis; L-arginine from L-ornithine and carbamoyl phosphate: step 2/3. The polypeptide is Argininosuccinate synthase (Roseiflexus castenholzii (strain DSM 13941 / HLO8)).